The sequence spans 184 residues: GMP synthase [glutamine-hydrolyzing] subunit A (184 aa).

Residues 3–184 form the Glutamine amidotransferase type-1 domain; that stretch reads HIAVIDNHGQ…VFKNFIARCQ (182 aa). Cys-75 serves as the catalytic Nucleophile. Residues His-163 and Glu-165 contribute to the active site.

Heterodimer composed of a glutamine amidotransferase subunit (A) and a GMP-binding subunit (B).

The catalysed reaction is XMP + L-glutamine + ATP + H2O = GMP + L-glutamate + AMP + diphosphate + 2 H(+). It functions in the pathway purine metabolism; GMP biosynthesis; GMP from XMP (L-Gln route): step 1/1. Catalyzes the synthesis of GMP from XMP. This chain is GMP synthase [glutamine-hydrolyzing] subunit A, found in Haloquadratum walsbyi (strain DSM 16790 / HBSQ001).